The following is a 137-amino-acid chain: Sch210972 biosynthesis cluster protein E (137 aa).

A compositionally biased stretch (polar residues) spans 1-12; sequence MTKYTSVNSSLP. The disordered stretch occupies residues 1–137; the sequence is MTKYTSVNSS…ASTIRPPCCG (137 aa). Positions 15-27 are enriched in low complexity; the sequence is PRQTTPTRPATQT. Residues 51 to 71 show a composition bias toward polar residues; sequence GSLNGSPTLRTTLDTSLSGTR. Positions 94–109 are enriched in basic and acidic residues; sequence DEDHPHDPGPDSDAKK.

Its pathway is secondary metabolite biosynthesis. Its function is as follows. Part of the gene cluster that mediates the biosynthesis of the tetramic acid Sch210972, a potential anti-HIV fungal natural product that contains a decalin core. The PKS module of cghG together with the enoylreductase cghC catalyze the formation of the polyketide unit which is then conjugated to 4-hydroxyl-4-methyl glutamate (HMG) by the condensation domain of the cghG NRPS module. One unique structural feature of Sch210972 is the tetramic acid motif proposed to be derived from the non-proteinogenic amino acid HMG, by a Dieckmann-type condensation catalyzed by the reductase domain of cghG. The aldolase cghB catalyzes the aldol condensation of 2 molecules of pyruvic acid to yield the intermediate 4-hydroxyl-4-methyl-2-oxoglutarate (HMOG), which can then be stereoselectively transaminated by an unidentified enzyme to form HMG. The Diels-Alderase cghA then uses the Dieckmann product released by cghG as substrate and catalyzes the Diels-Alder cycloaddition to form the decalin ring of Sch210972. CghA also suppresses the nonenzymatic formation of the alternative stereoisomer. This chain is Sch210972 biosynthesis cluster protein E, found in Chaetomium globosum (strain ATCC 6205 / CBS 148.51 / DSM 1962 / NBRC 6347 / NRRL 1970) (Soil fungus).